We begin with the raw amino-acid sequence, 331 residues long: Zinc finger CW-type PWWP domain protein 2 homolog (331 aa).

A CW-type zinc finger spans residues 9–64 (EFVHRTWVQCENESCLKWRLLSPAAAAAVNPSEPWYCFMNTDPSYSSCSVSEEDFP). The Zn(2+) site is built by C18, C23, C45, and C56. The PWWP domain maps to 83–147 (LGSLVLVKLR…AAFVGHFSLT (65 aa)). Residues 264-295 (IQEPTAREDESQGEQLSQCSPESPTGSPFQSY) form a disordered region. The span at 276-293 (GEQLSQCSPESPTGSPFQ) shows a compositional bias: polar residues.

Functionally, histone methylation reader which binds to non-methylated (H3K4me0), monomethylated (H3K4me1), dimethylated (H3K4me2) and trimethylated (H3K4me3) 'Lys-4' on histone H3. The order of binding preference is H3K4me3 &gt; H3K4me2 &gt; H3K4me1 &gt; H3K4me0. The polypeptide is Zinc finger CW-type PWWP domain protein 2 homolog (Zcwpw2) (Mus musculus (Mouse)).